The chain runs to 292 residues: 4-diphosphocytidyl-2-C-methyl-D-erythritol kinase (292 aa).

K20 is a catalytic residue. Residue 103-113 (PMGGGIGGGSS) participates in ATP binding. Residue D145 is part of the active site.

The protein belongs to the GHMP kinase family. IspE subfamily.

The enzyme catalyses 4-CDP-2-C-methyl-D-erythritol + ATP = 4-CDP-2-C-methyl-D-erythritol 2-phosphate + ADP + H(+). It functions in the pathway isoprenoid biosynthesis; isopentenyl diphosphate biosynthesis via DXP pathway; isopentenyl diphosphate from 1-deoxy-D-xylulose 5-phosphate: step 3/6. In terms of biological role, catalyzes the phosphorylation of the position 2 hydroxy group of 4-diphosphocytidyl-2C-methyl-D-erythritol. This chain is 4-diphosphocytidyl-2-C-methyl-D-erythritol kinase, found in Cupriavidus taiwanensis (strain DSM 17343 / BCRC 17206 / CCUG 44338 / CIP 107171 / LMG 19424 / R1) (Ralstonia taiwanensis (strain LMG 19424)).